The chain runs to 894 residues: Desmocollin-1 (894 aa).

The signal sequence occupies residues 1–29 (MALASAAPGSIFCKQLLFSLLVLTLLCDA). Residues 30–134 (CQKVYLRVPS…KDTALKRSKR (105 aa)) constitute a propeptide that is removed on maturation. 5 consecutive Cadherin domains span residues 135-242 (RWAP…APYF), 243-354 (EHRV…PPSF), 355-471 (TETS…GPEC), 472-575 (HPPV…DHAP), and 576-682 (QIDK…STRD). Topologically, residues 135–691 (RWAPIPASLM…DVRPNVILGR (557 aa)) are extracellular. Residue N165 is glycosylated (N-linked (GlcNAc...) asparagine). T385 is subject to Phosphothreonine. The N-linked (GlcNAc...) asparagine glycan is linked to N546. A helical membrane pass occupies residues 692–714 (WAILAMVLGSVLLLCILFTCFCV). Over 715-894 (TAKRTVKKCF…RTLAKTCIKK (180 aa)) the chain is Cytoplasmic.

In terms of assembly, binds to JUP/plakoglobin. As to expression, strongly expressed in epidermis, less in lymph node and tongue.

The protein localises to the cell membrane. It is found in the cell junction. It localises to the desmosome. Functionally, a component of desmosome cell-cell junctions which are required for positive regulation of cellular adhesion. Required for desmosome adhesion strength between the granular layers of the epidermis, as a result moderates epidermal proliferation and differentiation. Is therefore required to maintain postnatal epidermal barrier function and normal hair follicle morphology into adulthood. The protein is Desmocollin-1 (DSC1) of Homo sapiens (Human).